Reading from the N-terminus, the 147-residue chain is Transcriptional regulator MraZ (147 aa).

SpoVT-AbrB domains follow at residues 5-52 (NHPT…PMEE) and 81-124 (GQVV…NAEH).

This sequence belongs to the MraZ family. In terms of assembly, forms oligomers.

Its subcellular location is the cytoplasm. The protein localises to the nucleoid. This is Transcriptional regulator MraZ from Koribacter versatilis (strain Ellin345).